Consider the following 442-residue polypeptide: Yes-associated protein homolog 1 (442 aa).

Residues 1 to 10 (MASKSIHKKH) show a composition bias toward basic residues. The interval 1–84 (MASKSIHKKH…GSVDESSRTA (84 aa)) is disordered. 2 stretches are compositionally biased toward polar residues: residues 13–22 (NSQQDKNQFS) and 55–71 (LPSS…SSAH). Serine 104 bears the Phosphoserine mark. A compositionally biased stretch (polar residues) spans 108-120 (LHTSVNNGQSSAT). Residues 108-136 (LHTSVNNGQSSATVPHPSHHNVHHQHSKS) are disordered. Positions 124–134 (PSHHNVHHQHS) are enriched in basic residues. Residues 203 to 236 (LPMPQGWEMCYDSDGVRYFKDHNSKTTTWDDPRL) enclose the WW domain.

It belongs to the YAP1 family. Highly divergent. In terms of assembly, interacts (via WW domain) with wts-1 (via N-terminus). Interacts (via WW domain) with egl-44; the interaction may regulate transcription. Expressed in epithelia, hypodermis, muscles, pharynx, intestine, gonadal sheath cells, vulva, spermatheca and in excretory tissue.

It localises to the cytoplasm. The protein resides in the nucleus. The protein localises to the cell projection. It is found in the cilium. Its subcellular location is the cytoskeleton. It localises to the cilium axoneme. Plays a role in thermal stress response and in aging. This chain is Yes-associated protein homolog 1, found in Caenorhabditis elegans.